A 139-amino-acid chain; its full sequence is ATP synthase epsilon chain (139 aa).

The protein belongs to the ATPase epsilon chain family. F-type ATPases have 2 components, CF(1) - the catalytic core - and CF(0) - the membrane proton channel. CF(1) has five subunits: alpha(3), beta(3), gamma(1), delta(1), epsilon(1). CF(0) has three main subunits: a, b and c.

The protein localises to the cell inner membrane. Produces ATP from ADP in the presence of a proton gradient across the membrane. The sequence is that of ATP synthase epsilon chain from Alcanivorax borkumensis (strain ATCC 700651 / DSM 11573 / NCIMB 13689 / SK2).